Here is a 531-residue protein sequence, read N- to C-terminus: Importin subunit alpha-2 (531 aa).

A compositionally biased stretch (polar residues) spans 1–10 (MTLTETSLSH). Residues 1–88 (MTLTETSLSH…ISHQQSSTRL (88 aa)) form a disordered region. Residues 5 to 67 (ETSLSHNAEE…RNIVDVDEGG (63 aa)) enclose the IBB domain. 2 stretches are compositionally biased toward basic and acidic residues: residues 11–20 (NAEEGKDEGG) and 29–50 (TKHEELRRRRTECSVEIRKQKG). Over residues 62–75 (DVDEGGNSESELEE) the composition is skewed to acidic residues. ARM repeat units lie at residues 122 to 161 (NPPIDEVIHCGLLQALVQALSVENERVQYEAAWALTNIVS), 164 to 203 (TEQTIAAVEAGVTIPLIHLSVHQSAQISEQALWAVANIAG), 250 to 290 (KNPH…YLTD), 293 to 331 (DEQIELARESGVLPHVVAFFKEAENLVAPALRTLGNVAT), 334 to 374 (DSLT…NIIA), 377 to 416 (QKQIQAVLDANLLPVLINVLKSGDHKCQFEASWALSNLAQ), and 420 to 459 (NRQVVAMLEDNVVPALCQALLQTNTDMLNNTLETLYTLML). The disordered stretch occupies residues 511 to 531 (DDAGEKESHENADPQDNKWSF). Basic and acidic residues predominate over residues 515–531 (EKESHENADPQDNKWSF).

Belongs to the importin alpha family. As to quaternary structure, forms a complex with an importin beta subunit. Interacts with akir-1. Germline tissues. Expressed exclusively in germ line cells from the early embryonic through adult stages.

The protein localises to the cytoplasm. It is found in the nucleus. Its subcellular location is the nucleus envelope. In terms of biological role, nuclear transport receptor that mediates nuclear import of proteins, and which is involved in sister chromatid cohesion. Binds specifically and directly to substrates containing either a simple or bipartite nuclear localization signals (NLS) motif. Promotes docking of import substrates to the nuclear envelope. Together with akir-1 adapter, required for the import and load of cohesin complex proteins in meiotic nuclei. This chain is Importin subunit alpha-2, found in Caenorhabditis elegans.